The sequence spans 274 residues: 2,3,4,5-tetrahydropyridine-2,6-dicarboxylate N-succinyltransferase (274 aa).

Substrate-binding residues include arginine 106 and aspartate 143.

Belongs to the transferase hexapeptide repeat family. Homotrimer.

The protein resides in the cytoplasm. It catalyses the reaction (S)-2,3,4,5-tetrahydrodipicolinate + succinyl-CoA + H2O = (S)-2-succinylamino-6-oxoheptanedioate + CoA. It participates in amino-acid biosynthesis; L-lysine biosynthesis via DAP pathway; LL-2,6-diaminopimelate from (S)-tetrahydrodipicolinate (succinylase route): step 1/3. This Cupriavidus metallidurans (strain ATCC 43123 / DSM 2839 / NBRC 102507 / CH34) (Ralstonia metallidurans) protein is 2,3,4,5-tetrahydropyridine-2,6-dicarboxylate N-succinyltransferase.